The sequence spans 200 residues: Recombination protein RecR (200 aa).

The C4-type zinc finger occupies 57–72 (CSECRTFTEEDTCAIC). Positions 81-176 (GEMCIVESPA…PASRIAHGVP (96 aa)) constitute a Toprim domain.

The protein belongs to the RecR family.

May play a role in DNA repair. It seems to be involved in an RecBC-independent recombinational process of DNA repair. It may act with RecF and RecO. The polypeptide is Recombination protein RecR (Aliivibrio fischeri (strain ATCC 700601 / ES114) (Vibrio fischeri)).